The primary structure comprises 544 residues: Chaperonin GroEL 2 (544 aa).

ATP contacts are provided by residues 29–32 (TLGP), 86–90 (DGTTT), Gly-413, 479–481 (NAA), and Asp-495.

The protein belongs to the chaperonin (HSP60) family. Forms a cylinder of 14 subunits composed of two heptameric rings stacked back-to-back. Interacts with the co-chaperonin GroES.

The protein resides in the cytoplasm. It carries out the reaction ATP + H2O + a folded polypeptide = ADP + phosphate + an unfolded polypeptide.. In terms of biological role, together with its co-chaperonin GroES, plays an essential role in assisting protein folding. The GroEL-GroES system forms a nano-cage that allows encapsulation of the non-native substrate proteins and provides a physical environment optimized to promote and accelerate protein folding. The chain is Chaperonin GroEL 2 from Trichodesmium erythraeum (strain IMS101).